Consider the following 152-residue polypeptide: 3-hydroxyacyl-[acyl-carrier-protein] dehydratase FabZ (152 aa).

Histidine 58 is an active-site residue.

Belongs to the thioester dehydratase family. FabZ subfamily.

The protein resides in the cytoplasm. The catalysed reaction is a (3R)-hydroxyacyl-[ACP] = a (2E)-enoyl-[ACP] + H2O. Involved in unsaturated fatty acids biosynthesis. Catalyzes the dehydration of short chain beta-hydroxyacyl-ACPs and long chain saturated and unsaturated beta-hydroxyacyl-ACPs. The polypeptide is 3-hydroxyacyl-[acyl-carrier-protein] dehydratase FabZ (Prochlorococcus marinus (strain MIT 9301)).